Here is a 215-residue protein sequence, read N- to C-terminus: Pyrrolidone-carboxylate peptidase (215 aa).

Active-site residues include Glu78, Cys141, and His165.

It belongs to the peptidase C15 family. In terms of assembly, homotetramer.

It is found in the cytoplasm. The catalysed reaction is Release of an N-terminal pyroglutamyl group from a polypeptide, the second amino acid generally not being Pro.. Functionally, removes 5-oxoproline from various penultimate amino acid residues except L-proline. The polypeptide is Pyrrolidone-carboxylate peptidase (Streptococcus suis (strain 98HAH33)).